The sequence spans 274 residues: Formamidopyrimidine-DNA glycosylase (274 aa).

Pro2 (schiff-base intermediate with DNA) is an active-site residue. Glu3 (proton donor) is an active-site residue. Lys59 functions as the Proton donor; for beta-elimination activity in the catalytic mechanism. Residues His93, Arg112, and Lys153 each contribute to the DNA site. The FPG-type zinc finger occupies Gln238–Gln272. Catalysis depends on Arg262, which acts as the Proton donor; for delta-elimination activity.

This sequence belongs to the FPG family. As to quaternary structure, monomer. Zn(2+) serves as cofactor.

It carries out the reaction Hydrolysis of DNA containing ring-opened 7-methylguanine residues, releasing 2,6-diamino-4-hydroxy-5-(N-methyl)formamidopyrimidine.. The enzyme catalyses 2'-deoxyribonucleotide-(2'-deoxyribose 5'-phosphate)-2'-deoxyribonucleotide-DNA = a 3'-end 2'-deoxyribonucleotide-(2,3-dehydro-2,3-deoxyribose 5'-phosphate)-DNA + a 5'-end 5'-phospho-2'-deoxyribonucleoside-DNA + H(+). Functionally, involved in base excision repair of DNA damaged by oxidation or by mutagenic agents. Acts as a DNA glycosylase that recognizes and removes damaged bases. Has a preference for oxidized purines, such as 7,8-dihydro-8-oxoguanine (8-oxoG). Has AP (apurinic/apyrimidinic) lyase activity and introduces nicks in the DNA strand. Cleaves the DNA backbone by beta-delta elimination to generate a single-strand break at the site of the removed base with both 3'- and 5'-phosphates. In Mycoplasma mobile (strain ATCC 43663 / 163K / NCTC 11711) (Mesomycoplasma mobile), this protein is Formamidopyrimidine-DNA glycosylase.